Consider the following 334-residue polypeptide: Phospho-N-acetylmuramoyl-pentapeptide-transferase (334 aa).

Transmembrane regions (helical) follow at residues 11 to 31, 55 to 75, 84 to 104, 124 to 144, 158 to 178, 184 to 204, 205 to 225, 233 to 253, 258 to 278, and 311 to 331; these read GAGL…IPLM, PTMG…IFAP, LIIA…DDYI, VGLA…GTAV, PLYY…VNFA, LLGG…ALAL, GQTD…GFLH, IFMG…LAVL, FLLV…ILQV, and LFWG…PGML.

It belongs to the glycosyltransferase 4 family. MraY subfamily. Requires Mg(2+) as cofactor.

It is found in the cell membrane. It catalyses the reaction UDP-N-acetyl-alpha-D-muramoyl-L-alanyl-gamma-D-glutamyl-meso-2,6-diaminopimeloyl-D-alanyl-D-alanine + di-trans,octa-cis-undecaprenyl phosphate = di-trans,octa-cis-undecaprenyl diphospho-N-acetyl-alpha-D-muramoyl-L-alanyl-D-glutamyl-meso-2,6-diaminopimeloyl-D-alanyl-D-alanine + UMP. It participates in cell wall biogenesis; peptidoglycan biosynthesis. Catalyzes the initial step of the lipid cycle reactions in the biosynthesis of the cell wall peptidoglycan: transfers peptidoglycan precursor phospho-MurNAc-pentapeptide from UDP-MurNAc-pentapeptide onto the lipid carrier undecaprenyl phosphate, yielding undecaprenyl-pyrophosphoryl-MurNAc-pentapeptide, known as lipid I. This is Phospho-N-acetylmuramoyl-pentapeptide-transferase from Symbiobacterium thermophilum (strain DSM 24528 / JCM 14929 / IAM 14863 / T).